A 404-amino-acid chain; its full sequence is Odorant receptor 67c (404 aa).

Topologically, residues 1-45 (METAKDNTARTFMELMRVPVQFYRTIGEDIYAHRSTNPLKSLLFK) are cytoplasmic. A helical membrane pass occupies residues 46-66 (IYLYAGFINFNLLVIGELVFF). At 67-79 (YNSIQDFETIRLA) the chain is on the extracellular side. The chain crosses the membrane as a helical span at residues 80-100 (IAVAPCIGFSLVADFKQAAMI). The Cytoplasmic segment spans residues 101-139 (RGKKTLIMLLDDLENMHPKTLAKQMEYKLPDFEKTMKRV). A helical transmembrane segment spans residues 140 to 160 (INIFTFLCLAYTTTFSFYPAI). The Extracellular portion of the chain corresponds to 161–204 (KASVKFNFLGYDTFDRNFGFLIWFPFDATRNNLIYWIMYWDIAH). A helical transmembrane segment spans residues 205–225 (GAYLAGIAFLCADLLLVVVIT). Residues 226–277 (QICMHFNYISMRLEDHPCNSNEDKENIEFLIGIIRYHDKCLKLCEHVNDLYS) are Cytoplasmic-facing. The chain crosses the membrane as a helical span at residues 278-298 (FSLLLNFLMASMQICFIAFQV). At 299–304 (TESTVE) the chain is on the extracellular side. A helical membrane pass occupies residues 305 to 326 (VIIIYCIFLMTSMVQVFMVCYY). The Cytoplasmic portion of the chain corresponds to 327–373 (GDTLIAASLKVGDAAYNQKWFQCSKSYCTMLKLLIMRSQKPASIRPP). The chain crosses the membrane as a helical span at residues 374–394 (TFPPISLVTYMKVISMSYQFF). The Extracellular segment spans residues 395–404 (ALLRTTYSNN).

The protein belongs to the insect chemoreceptor superfamily. Heteromeric odorant receptor channel (TC 1.A.69) family. Or49a subfamily. Interacts with Orco. Complexes exist early in the endomembrane system in olfactory sensory neurons (OSNs), coupling these complexes to the conserved ciliary trafficking pathway. As to expression, expressed in olfactory sensory neurons in the antenna.

It is found in the cell membrane. Its function is as follows. Odorant receptor which mediates acceptance or avoidance behavior, depending on its substrates. The odorant receptor repertoire encodes a large collection of odor stimuli that vary widely in identity, intensity, and duration. May form a complex with Orco to form odorant-sensing units, providing sensitive and prolonged odorant signaling and calcium permeability. In Drosophila melanogaster (Fruit fly), this protein is Odorant receptor 67c (Or67c).